Consider the following 125-residue polypeptide: Large ribosomal subunit protein bL19 (125 aa).

The protein belongs to the bacterial ribosomal protein bL19 family.

In terms of biological role, this protein is located at the 30S-50S ribosomal subunit interface and may play a role in the structure and function of the aminoacyl-tRNA binding site. The protein is Large ribosomal subunit protein bL19 of Wolbachia pipientis wMel.